A 160-amino-acid chain; its full sequence is Transcription elongation factor GreA (160 aa).

Residues 1-72 (MAEKTYPMTL…QISSLETKIR (72 aa)) adopt a coiled-coil conformation.

It belongs to the GreA/GreB family.

In terms of biological role, necessary for efficient RNA polymerase transcription elongation past template-encoded arresting sites. The arresting sites in DNA have the property of trapping a certain fraction of elongating RNA polymerases that pass through, resulting in locked ternary complexes. Cleavage of the nascent transcript by cleavage factors such as GreA or GreB allows the resumption of elongation from the new 3'terminus. GreA releases sequences of 2 to 3 nucleotides. The protein is Transcription elongation factor GreA of Streptococcus pneumoniae serotype 4 (strain ATCC BAA-334 / TIGR4).